A 1043-amino-acid polypeptide reads, in one-letter code: Isoleucine--tRNA ligase (1043 aa).

Residues 49-59 carry the 'HIGH' region motif; that stretch reads PFATGLPHYGH. The short motif at 592-596 is the 'KMSKS' region element; that stretch reads KMSKR. Residue Lys-595 participates in ATP binding.

This sequence belongs to the class-I aminoacyl-tRNA synthetase family. IleS type 2 subfamily. As to quaternary structure, monomer. Zn(2+) serves as cofactor.

The protein localises to the cytoplasm. The catalysed reaction is tRNA(Ile) + L-isoleucine + ATP = L-isoleucyl-tRNA(Ile) + AMP + diphosphate. Catalyzes the attachment of isoleucine to tRNA(Ile). As IleRS can inadvertently accommodate and process structurally similar amino acids such as valine, to avoid such errors it has two additional distinct tRNA(Ile)-dependent editing activities. One activity is designated as 'pretransfer' editing and involves the hydrolysis of activated Val-AMP. The other activity is designated 'posttransfer' editing and involves deacylation of mischarged Val-tRNA(Ile). The sequence is that of Isoleucine--tRNA ligase from Chlamydia abortus (strain DSM 27085 / S26/3) (Chlamydophila abortus).